A 430-amino-acid polypeptide reads, in one-letter code: Signal recognition particle receptor FtsY (430 aa).

Residues 75 to 95 (DTGELPAVGDDATVPRDSPRH) form a disordered region. Residues 238 to 245 (GVNGTGKT), 320 to 324 (DTAGR), and 382 to 385 (TKLD) each bind GTP.

It belongs to the GTP-binding SRP family. FtsY subfamily. As to quaternary structure, part of the signal recognition particle protein translocation system, which is composed of SRP and FtsY.

Its subcellular location is the cell membrane. The protein resides in the cytoplasm. It catalyses the reaction GTP + H2O = GDP + phosphate + H(+). Functionally, involved in targeting and insertion of nascent membrane proteins into the cytoplasmic membrane. Acts as a receptor for the complex formed by the signal recognition particle (SRP) and the ribosome-nascent chain (RNC). This chain is Signal recognition particle receptor FtsY, found in Mycobacterium leprae (strain TN).